The primary structure comprises 541 residues: Probable inorganic phosphate transporter 1-8 (541 aa).

The Cytoplasmic segment spans residues 1–28 (MARQEQQQHLQVLSALDAAKTQWYHFTA). A helical transmembrane segment spans residues 29-49 (IVVAGMGFFTDAYDLFCISLV). At 50–74 (TKLLGRIYYTDLAKENPGSLPPNVA) the chain is on the extracellular side. A helical transmembrane segment spans residues 75 to 95 (AAVNGVAFCGTLAGQLFFGWL). At 96 to 102 (GDKLGRK) the chain is on the cytoplasmic side. Residues 103–123 (SVYGMTLLMMVICSIASGLSF) traverse the membrane as a helical segment. Residues 124-126 (SHT) lie on the Extracellular side of the membrane. Residues 127 to 147 (PTSVMATLCFFRFWLGFGIGG) form a helical membrane-spanning segment. Residues 148-168 (DYPLSATIMSEYANKKTRGAF) are Cytoplasmic-facing. A helical membrane pass occupies residues 169–189 (IAAVFAMQGFGILAGGIVTLI). Residues 190–215 (ISSAFRAGFPAPAYQDDRAGSTVRQA) lie on the Extracellular side of the membrane. A helical membrane pass occupies residues 216–236 (DYVWRIILMLGAMPALLTYYW). Topologically, residues 237-297 (RMKMPETARY…GLFSRQFARR (61 aa)) are cytoplasmic. A helical membrane pass occupies residues 298–318 (HGLHLVGTATTWFLLDIAFYS). The Extracellular segment spans residues 319 to 353 (QNLFQKDIFTSINWIPKAKTMSALEEVFRIARAQT). Residues 354-374 (LIALCGTVPGYWFTVFLIDIV) traverse the membrane as a helical segment. Residues 375-376 (GR) are Cytoplasmic-facing. Residues 377-397 (FAIQLLGFFMMTVFMLGLAVP) traverse the membrane as a helical segment. Residues 398 to 404 (YHHWTTK) lie on the Extracellular side of the membrane. The chain crosses the membrane as a helical span at residues 405–425 (GNHIGFVVMYAFTFFFANFGP). At 426-447 (NSTTFIVPAEIFPARLRSTCHG) the chain is on the cytoplasmic side. Residues 448-468 (ISAAAGKAGAIIGSFGFLYAA) form a helical membrane-spanning segment. Residues 469-486 (QDPHKPDAGYKPGIGVRN) are Extracellular-facing. Residues 487–507 (SLFVLAGCNLLGFICTFLVPE) traverse the membrane as a helical segment. The Cytoplasmic portion of the chain corresponds to 508–541 (SKGKSLEEMSGEAEDDDDEVAAAGGGAAVRPQTA). Positions 514-541 (EEMSGEAEDDDDEVAAAGGGAAVRPQTA) are disordered. The segment covering 516–527 (MSGEAEDDDDEV) has biased composition (acidic residues).

The protein belongs to the major facilitator superfamily. Phosphate:H(+) symporter (TC 2.A.1.9) family.

It is found in the membrane. Its function is as follows. High-affinity transporter for external inorganic phosphate. The chain is Probable inorganic phosphate transporter 1-8 (PHT1-8) from Oryza sativa subsp. japonica (Rice).